The following is a 305-amino-acid chain: MPLNLPDKLPAIELLKEENIFVIDNSRATQQDIRPLRIVILNLMPLKITTETDLVRLLSNTPLQVEISFMKIKSHTSKNTPIEHMKTFYTDFDKMREDRYDGMIITGAPVEQMDFEEVNYWDEITEIFDWARTHVTSTLYICWAAQAGLYHHYGIPKYALDKKMFGIFKHRTLLPLHPIFRGFDDEFYVPHSRHTEVRKEDILKVPELTLLSESDDSGVYMVVARGGREFFVTGHSEYSPLTLDTEYRRDVSKGLPIEIPRNYYVNDDPDKGPLVRWRGHANLLFSNWLNYFVYQETPYNIEDIR.

Residue Cys-142 is the Acyl-thioester intermediate of the active site. Residues Lys-163 and Ser-192 each coordinate substrate. Catalysis depends on His-235, which acts as the Proton acceptor. Glu-237 is a catalytic residue. Arg-249 provides a ligand contact to substrate.

Belongs to the MetA family.

The protein resides in the cytoplasm. The enzyme catalyses L-homoserine + acetyl-CoA = O-acetyl-L-homoserine + CoA. It participates in amino-acid biosynthesis; L-methionine biosynthesis via de novo pathway; O-acetyl-L-homoserine from L-homoserine: step 1/1. In terms of biological role, transfers an acetyl group from acetyl-CoA to L-homoserine, forming acetyl-L-homoserine. The protein is Homoserine O-acetyltransferase of Bacteroides fragilis (strain YCH46).